The primary structure comprises 368 residues: Seven-bladed beta-propeller protein MSMEG_5308 (368 aa).

Interacts with MmpL3 and TtfA.

The protein localises to the cell septum. Its subcellular location is the cell tip. Functionally, stabilizes the MmpL3/TtfA trehalose monomycolate (TMM) transport complex under stress conditions. The chain is Seven-bladed beta-propeller protein MSMEG_5308 from Mycolicibacterium smegmatis (strain ATCC 700084 / mc(2)155) (Mycobacterium smegmatis).